Reading from the N-terminus, the 379-residue chain is Homoserine O-succinyltransferase (379 aa).

Residues 51 to 360 enclose the AB hydrolase-1 domain; it reads NAVLICHALS…DSPYGHDAFL (310 aa). The active-site Nucleophile is S157. Residue R227 participates in substrate binding. Catalysis depends on residues D323 and H356. Residue D357 coordinates substrate.

The protein belongs to the AB hydrolase superfamily. MetX family. Homodimer.

Its subcellular location is the cytoplasm. The catalysed reaction is L-homoserine + succinyl-CoA = O-succinyl-L-homoserine + CoA. It functions in the pathway amino-acid biosynthesis; L-methionine biosynthesis via de novo pathway; O-succinyl-L-homoserine from L-homoserine: step 1/1. In terms of biological role, transfers a succinyl group from succinyl-CoA to L-homoserine, forming succinyl-L-homoserine. The polypeptide is Homoserine O-succinyltransferase (Pseudomonas putida (strain GB-1)).